The sequence spans 81 residues: Putative defensin-like protein 26 (81 aa).

A signal peptide spans 1–21; it reads MASLKVFSFALLIVLTFSVIG. Cystine bridges form between C33–C81 and C52–C77.

Belongs to the DEFL family.

It is found in the secreted. The polypeptide is Putative defensin-like protein 26 (Arabidopsis thaliana (Mouse-ear cress)).